A 141-amino-acid polypeptide reads, in one-letter code: Translation initiation factor 2 subunit beta (141 aa).

Belongs to the eIF-2-beta/eIF-5 family. Heterotrimer composed of an alpha, a beta and a gamma chain.

In terms of biological role, eIF-2 functions in the early steps of protein synthesis by forming a ternary complex with GTP and initiator tRNA. In Thermofilum pendens (strain DSM 2475 / Hrk 5), this protein is Translation initiation factor 2 subunit beta.